Reading from the N-terminus, the 305-residue chain is Probable 2-methylisocitrate lyase 1 (305 aa).

52–54 (SGA) contacts substrate. Mg(2+) is bound by residues Asp91 and Asp93. Substrate contacts are provided by residues 128 to 129 (CG), Arg163, Glu193, 216 to 218 (NMT), Arg247, and Arg276.

The protein belongs to the isocitrate lyase/PEP mutase superfamily. Methylisocitrate lyase family. Homotetramer; dimer of dimers. Mg(2+) serves as cofactor.

It carries out the reaction (2S,3R)-3-hydroxybutane-1,2,3-tricarboxylate = pyruvate + succinate. In terms of biological role, catalyzes the thermodynamically favored C-C bond cleavage of (2R,3S)-2-methylisocitrate to yield pyruvate and succinate via an alpha-carboxy-carbanion intermediate. This chain is Probable 2-methylisocitrate lyase 1, found in Corynebacterium glutamicum (strain ATCC 13032 / DSM 20300 / JCM 1318 / BCRC 11384 / CCUG 27702 / LMG 3730 / NBRC 12168 / NCIMB 10025 / NRRL B-2784 / 534).